A 193-amino-acid polypeptide reads, in one-letter code: Major structural subunit of bundle-forming pilus (193 aa).

Residues 1-13 (MVSKIMNKKYEKG) constitute a propeptide that is removed on maturation. N-methylleucine is present on Leu-14. The helical transmembrane segment at 14–35 (LSLIESAMVLALAATVTAGVMF) threads the bilayer. A disulfide bond links Cys-129 and Cys-179.

Belongs to the N-Me-Phe pilin family. 10 to 100 laterally aligned filaments or bundle-forming pili coalesce into rope-like bundles. These form linkages between the bacteria within the enteropathogenic E.coli (EPEC) microcolonies that are attached to epithelial cells.

The protein resides in the fimbrium. Its subcellular location is the membrane. Major repeating bundle-forming pilus (BFP) subunit. Is required for EPEC localized adherence. This Escherichia coli O111:H- protein is Major structural subunit of bundle-forming pilus (bfpA).